We begin with the raw amino-acid sequence, 168 residues long: Peptide deformylase 2 (168 aa).

Fe cation contacts are provided by Cys91 and His133. The active site involves Glu134. His137 contacts Fe cation.

It belongs to the polypeptide deformylase family. Fe(2+) is required as a cofactor.

The enzyme catalyses N-terminal N-formyl-L-methionyl-[peptide] + H2O = N-terminal L-methionyl-[peptide] + formate. In terms of biological role, removes the formyl group from the N-terminal Met of newly synthesized proteins. Requires at least a dipeptide for an efficient rate of reaction. N-terminal L-methionine is a prerequisite for activity but the enzyme has broad specificity at other positions. In Vibrio parahaemolyticus serotype O3:K6 (strain RIMD 2210633), this protein is Peptide deformylase 2.